The chain runs to 47 residues: Large ribosomal subunit protein bL34 (47 aa).

The protein belongs to the bacterial ribosomal protein bL34 family.

In Nocardia farcinica (strain IFM 10152), this protein is Large ribosomal subunit protein bL34.